We begin with the raw amino-acid sequence, 323 residues long: ATP synthase gamma chain (323 aa).

This sequence belongs to the ATPase gamma chain family. In terms of assembly, F-type ATPases have 2 components, CF(1) - the catalytic core - and CF(0) - the membrane proton channel. CF(1) has five subunits: alpha(3), beta(3), gamma(1), delta(1), epsilon(1). CF(0) has three main subunits: a, b and c.

It localises to the cell inner membrane. Produces ATP from ADP in the presence of a proton gradient across the membrane. The gamma chain is believed to be important in regulating ATPase activity and the flow of protons through the CF(0) complex. The polypeptide is ATP synthase gamma chain (Rickettsia africae (strain ESF-5)).